Consider the following 381-residue polypeptide: Deoxyguanosinetriphosphate triphosphohydrolase-like protein (381 aa).

An HD domain is found at 76 to 203 (RMTHTLEVAG…ADLSDEIAYT (128 aa)).

Belongs to the dGTPase family. Type 2 subfamily.

The protein is Deoxyguanosinetriphosphate triphosphohydrolase-like protein of Leptospira interrogans serogroup Icterohaemorrhagiae serovar copenhageni (strain Fiocruz L1-130).